A 673-amino-acid chain; its full sequence is Ion-translocating oxidoreductase complex subunit C (673 aa).

2 4Fe-4S ferredoxin-type domains span residues 368-397 (MGAP…QQLY) and 407-436 (KATA…VQYF). Residues C377, C380, C383, C387, C416, C419, C422, and C426 each coordinate [4Fe-4S] cluster. A disordered region spans residues 529 to 554 (EARKAQARAKQAGHPMADSATSGDDP).

This sequence belongs to the 4Fe4S bacterial-type ferredoxin family. RnfC subfamily. In terms of assembly, the complex is composed of six subunits: RsxA, RsxB, RsxC, RsxD, RsxE and RsxG. [4Fe-4S] cluster is required as a cofactor.

It localises to the cell inner membrane. Part of a membrane-bound complex that couples electron transfer with translocation of ions across the membrane. Required to maintain the reduced state of SoxR. The sequence is that of Ion-translocating oxidoreductase complex subunit C from Salmonella arizonae (strain ATCC BAA-731 / CDC346-86 / RSK2980).